We begin with the raw amino-acid sequence, 201 residues long: Large ribosomal subunit protein bL25 (201 aa).

It belongs to the bacterial ribosomal protein bL25 family. CTC subfamily. Part of the 50S ribosomal subunit; part of the 5S rRNA/L5/L18/L25 subcomplex. Contacts the 5S rRNA. Binds to the 5S rRNA independently of L5 and L18.

Its function is as follows. This is one of the proteins that binds to the 5S RNA in the ribosome where it forms part of the central protuberance. This is Large ribosomal subunit protein bL25 from Chlorobaculum parvum (strain DSM 263 / NCIMB 8327) (Chlorobium vibrioforme subsp. thiosulfatophilum).